The primary structure comprises 415 residues: Serine hydroxymethyltransferase (415 aa).

(6S)-5,6,7,8-tetrahydrofolate is bound by residues Leu-122 and 126-128; that span reads GHL. Lys-230 carries the post-translational modification N6-(pyridoxal phosphate)lysine.

Belongs to the SHMT family. Homodimer. The cofactor is pyridoxal 5'-phosphate.

It localises to the cytoplasm. It catalyses the reaction (6R)-5,10-methylene-5,6,7,8-tetrahydrofolate + glycine + H2O = (6S)-5,6,7,8-tetrahydrofolate + L-serine. It participates in one-carbon metabolism; tetrahydrofolate interconversion. Its pathway is amino-acid biosynthesis; glycine biosynthesis; glycine from L-serine: step 1/1. In terms of biological role, catalyzes the reversible interconversion of serine and glycine with tetrahydrofolate (THF) serving as the one-carbon carrier. This reaction serves as the major source of one-carbon groups required for the biosynthesis of purines, thymidylate, methionine, and other important biomolecules. Also exhibits THF-independent aldolase activity toward beta-hydroxyamino acids, producing glycine and aldehydes, via a retro-aldol mechanism. The protein is Serine hydroxymethyltransferase of Ralstonia pickettii (strain 12J).